A 575-amino-acid polypeptide reads, in one-letter code: DNA mismatch repair protein MutL (575 aa).

It belongs to the DNA mismatch repair MutL/HexB family.

This protein is involved in the repair of mismatches in DNA. It is required for dam-dependent methyl-directed DNA mismatch repair. May act as a 'molecular matchmaker', a protein that promotes the formation of a stable complex between two or more DNA-binding proteins in an ATP-dependent manner without itself being part of a final effector complex. The chain is DNA mismatch repair protein MutL from Coxiella burnetii (strain CbuG_Q212) (Coxiella burnetii (strain Q212)).